A 453-amino-acid chain; its full sequence is Bis(5'-adenosyl)-triphosphatase ENPP4 (453 aa).

An N-terminal signal peptide occupies residues 1–18; that stretch reads MKLLLMLLFSGLMTGCRG. The Extracellular segment spans residues 19 to 407; it reads NSSSASPPKL…DQWCINLPEA (389 aa). Positions 34 and 70 each coordinate Zn(2+). The active-site AMP-threonine intermediate is T70. Substrate-binding residues include N91 and Y154. N166 is a glycosylation site (N-linked (GlcNAc...) asparagine). Residues D189, H193, D237, and H238 each coordinate Zn(2+). D189 is a substrate binding site. The cysteines at positions 254 and 287 are disulfide-linked. N276 carries an N-linked (GlcNAc...) asparagine glycan. H336 is a binding site for Zn(2+). C394 and C401 are oxidised to a cystine. Residues 408-428 traverse the membrane as a helical segment; that stretch reads IGIVIGALLVLTTLTCLIIIM. The Cytoplasmic portion of the chain corresponds to 429–453; that stretch reads QNRVSGPRPFSRLQLQEDDDDPLIG.

This sequence belongs to the nucleotide pyrophosphatase/phosphodiesterase family. Requires Zn(2+) as cofactor.

It is found in the cell membrane. The catalysed reaction is P(1),P(3)-bis(5'-adenosyl) triphosphate + H2O = AMP + ADP + 2 H(+). Its function is as follows. Hydrolyzes extracellular Ap3A into AMP and ADP, and Ap4A into AMP and ATP. Ap3A and Ap4A are diadenosine polyphosphates thought to induce proliferation of vascular smooth muscle cells. Acts as a procoagulant, mediating platelet aggregation at the site of nascent thrombus via release of ADP from Ap3A and activation of ADP receptors. The protein is Bis(5'-adenosyl)-triphosphatase ENPP4 (ENPP4) of Bos taurus (Bovine).